We begin with the raw amino-acid sequence, 478 residues long: Aspartyl/glutamyl-tRNA(Asn/Gln) amidotransferase subunit B (478 aa).

This sequence belongs to the GatB/GatE family. GatB subfamily. In terms of assembly, heterotrimer of A, B and C subunits.

It catalyses the reaction L-glutamyl-tRNA(Gln) + L-glutamine + ATP + H2O = L-glutaminyl-tRNA(Gln) + L-glutamate + ADP + phosphate + H(+). The enzyme catalyses L-aspartyl-tRNA(Asn) + L-glutamine + ATP + H2O = L-asparaginyl-tRNA(Asn) + L-glutamate + ADP + phosphate + 2 H(+). In terms of biological role, allows the formation of correctly charged Asn-tRNA(Asn) or Gln-tRNA(Gln) through the transamidation of misacylated Asp-tRNA(Asn) or Glu-tRNA(Gln) in organisms which lack either or both of asparaginyl-tRNA or glutaminyl-tRNA synthetases. The reaction takes place in the presence of glutamine and ATP through an activated phospho-Asp-tRNA(Asn) or phospho-Glu-tRNA(Gln). The sequence is that of Aspartyl/glutamyl-tRNA(Asn/Gln) amidotransferase subunit B from Dichelobacter nodosus (strain VCS1703A).